Consider the following 152-residue polypeptide: 3-hydroxyacyl-[acyl-carrier-protein] dehydratase FabZ (152 aa).

His58 is a catalytic residue.

Belongs to the thioester dehydratase family. FabZ subfamily.

The protein localises to the cytoplasm. The catalysed reaction is a (3R)-hydroxyacyl-[ACP] = a (2E)-enoyl-[ACP] + H2O. Its function is as follows. Involved in unsaturated fatty acids biosynthesis. Catalyzes the dehydration of short chain beta-hydroxyacyl-ACPs and long chain saturated and unsaturated beta-hydroxyacyl-ACPs. This is 3-hydroxyacyl-[acyl-carrier-protein] dehydratase FabZ from Prochlorococcus marinus (strain MIT 9515).